The primary structure comprises 446 residues: Glutamyl-tRNA reductase (446 aa).

Substrate contacts are provided by residues 49 to 52 (TCNR), S109, 114 to 116 (ETQ), and Q120. C50 (nucleophile) is an active-site residue. 189 to 194 (GAGETG) is an NADP(+) binding site.

Belongs to the glutamyl-tRNA reductase family. In terms of assembly, homodimer.

The catalysed reaction is (S)-4-amino-5-oxopentanoate + tRNA(Glu) + NADP(+) = L-glutamyl-tRNA(Glu) + NADPH + H(+). It functions in the pathway porphyrin-containing compound metabolism; protoporphyrin-IX biosynthesis; 5-aminolevulinate from L-glutamyl-tRNA(Glu): step 1/2. Functionally, catalyzes the NADPH-dependent reduction of glutamyl-tRNA(Glu) to glutamate 1-semialdehyde (GSA). This is Glutamyl-tRNA reductase from Exiguobacterium sibiricum (strain DSM 17290 / CCUG 55495 / CIP 109462 / JCM 13490 / 255-15).